A 257-amino-acid polypeptide reads, in one-letter code: MTEDQAPILDFWGPLRKTTQSRIGLGRAGDSLPTKRVLEFKAAHAAARDAVHEPLDSETLASRVDGVGIGAPVVVASSVSTRSEYLRRPDLGRQPADLSAIKSSDKEIGFILADGLSPRALMDHGEQLLSALVTALGERYSIAPPVIATNARVALGDHIAAAMGVQTAIVLIGERPGLSVADSVGIYLTHLPRVGRTDADRNCISNVHPPEGLGYEQAARVVLGLVTGARQLGRSGVDLKDTSRADAVASGEVLTLD.

Adenosylcob(III)alamin is bound by residues Val-153, Glu-174, and Cys-203.

The protein belongs to the EutC family. In terms of assembly, the basic unit is a heterodimer which dimerizes to form tetramers. The heterotetramers trimerize; 6 large subunits form a core ring with 6 small subunits projecting outwards. It depends on adenosylcob(III)alamin as a cofactor.

Its subcellular location is the bacterial microcompartment. It catalyses the reaction ethanolamine = acetaldehyde + NH4(+). Its pathway is amine and polyamine degradation; ethanolamine degradation. Catalyzes the deamination of various vicinal amino-alcohols to oxo compounds. Allows this organism to utilize ethanolamine as the sole source of nitrogen and carbon in the presence of external vitamin B12. The sequence is that of Ethanolamine ammonia-lyase small subunit from Rhodococcus erythropolis (Arthrobacter picolinophilus).